The chain runs to 179 residues: Large ribosomal subunit protein uL5 (179 aa).

This sequence belongs to the universal ribosomal protein uL5 family. As to quaternary structure, part of the 50S ribosomal subunit; part of the 5S rRNA/L5/L18/L25 subcomplex. Contacts the 5S rRNA and the P site tRNA. Forms a bridge to the 30S subunit in the 70S ribosome.

This is one of the proteins that bind and probably mediate the attachment of the 5S RNA into the large ribosomal subunit, where it forms part of the central protuberance. In the 70S ribosome it contacts protein S13 of the 30S subunit (bridge B1b), connecting the 2 subunits; this bridge is implicated in subunit movement. Contacts the P site tRNA; the 5S rRNA and some of its associated proteins might help stabilize positioning of ribosome-bound tRNAs. This is Large ribosomal subunit protein uL5 from Rickettsia akari (strain Hartford).